A 356-amino-acid chain; its full sequence is GTPase Obg (356 aa).

The region spanning 1–159 is the Obg domain; that stretch reads MKFIDRVKIH…RWLRLELKLL (159 aa). The region spanning 160 to 331 is the OBG-type G domain; the sequence is ADVGLLGMPN…LVAEVARELE (172 aa). Residues 166–173, 191–195, 213–216, 283–286, and 312–314 contribute to the GTP site; these read GMPNAGKS, FTTLV, DIPG, SKID, and SAV. The Mg(2+) site is built by Ser173 and Thr193.

Belongs to the TRAFAC class OBG-HflX-like GTPase superfamily. OBG GTPase family. In terms of assembly, monomer. Mg(2+) serves as cofactor.

The protein localises to the cytoplasm. Its function is as follows. An essential GTPase which binds GTP, GDP and possibly (p)ppGpp with moderate affinity, with high nucleotide exchange rates and a fairly low GTP hydrolysis rate. Plays a role in control of the cell cycle, stress response, ribosome biogenesis and in those bacteria that undergo differentiation, in morphogenesis control. The chain is GTPase Obg from Syntrophotalea carbinolica (strain DSM 2380 / NBRC 103641 / GraBd1) (Pelobacter carbinolicus).